The primary structure comprises 402 residues: Exodeoxyribonuclease 7 large subunit (402 aa).

The protein belongs to the XseA family. As to quaternary structure, heterooligomer composed of large and small subunits.

It is found in the cytoplasm. It catalyses the reaction Exonucleolytic cleavage in either 5'- to 3'- or 3'- to 5'-direction to yield nucleoside 5'-phosphates.. In terms of biological role, bidirectionally degrades single-stranded DNA into large acid-insoluble oligonucleotides, which are then degraded further into small acid-soluble oligonucleotides. This chain is Exodeoxyribonuclease 7 large subunit, found in Moorella thermoacetica (strain ATCC 39073 / JCM 9320).